Here is a 222-residue protein sequence, read N- to C-terminus: Potassium-transporting ATPase KdpC subunit (222 aa).

A helical membrane pass occupies residues W13–T35. Positions T136–I162 are disordered.

This sequence belongs to the KdpC family. As to quaternary structure, the system is composed of three essential subunits: KdpA, KdpB and KdpC.

The protein resides in the cell membrane. Part of the high-affinity ATP-driven potassium transport (or Kdp) system, which catalyzes the hydrolysis of ATP coupled with the electrogenic transport of potassium into the cytoplasm. This subunit acts as a catalytic chaperone that increases the ATP-binding affinity of the ATP-hydrolyzing subunit KdpB by the formation of a transient KdpB/KdpC/ATP ternary complex. The protein is Potassium-transporting ATPase KdpC subunit of Streptomyces avermitilis (strain ATCC 31267 / DSM 46492 / JCM 5070 / NBRC 14893 / NCIMB 12804 / NRRL 8165 / MA-4680).